We begin with the raw amino-acid sequence, 271 residues long: Phosphonoacetaldehyde hydrolase (271 aa).

Residue Asp12 is the Nucleophile of the active site. Residues Asp12 and Ala14 each contribute to the Mg(2+) site. Lys54 serves as the catalytic Schiff-base intermediate with substrate. Asp188 is a Mg(2+) binding site.

The protein belongs to the HAD-like hydrolase superfamily. PhnX family. In terms of assembly, homodimer. Mg(2+) serves as cofactor.

It carries out the reaction phosphonoacetaldehyde + H2O = acetaldehyde + phosphate + H(+). Involved in phosphonate degradation. The chain is Phosphonoacetaldehyde hydrolase from Vibrio cholerae serotype O1 (strain ATCC 39541 / Classical Ogawa 395 / O395).